Reading from the N-terminus, the 335-residue chain is Ketol-acid reductoisomerase (NAD(P)(+)) (335 aa).

The 181-residue stretch at 5-185 folds into the KARI N-terminal Rossmann domain; sequence AKIYTDKDTT…GGTRAGAIET (181 aa). NADP(+)-binding positions include 28-31, R52, S56, and 86-89; these read YGSQ and DMAQ. The active site involves H111. G137 serves as a coordination point for NADP(+). Positions 186-331 constitute a KARI C-terminal knotted domain; sequence TFKEETETDL…RRLKEIIERG (146 aa). 4 residues coordinate Mg(2+): D194, E198, E230, and E234. Residue S255 participates in substrate binding. The disordered stretch occupies residues 301–335; that stretch reads GSPTLSKGLEEMDKSLEEQTGRRLKEIIERGRPKS. The segment covering 308–335 has biased composition (basic and acidic residues); it reads GLEEMDKSLEEQTGRRLKEIIERGRPKS.

The protein belongs to the ketol-acid reductoisomerase family. Mg(2+) serves as cofactor.

The enzyme catalyses (2R)-2,3-dihydroxy-3-methylbutanoate + NAD(+) = (2S)-2-acetolactate + NADH + H(+). It catalyses the reaction (2R)-2,3-dihydroxy-3-methylbutanoate + NADP(+) = (2S)-2-acetolactate + NADPH + H(+). Its pathway is amino-acid biosynthesis; L-isoleucine biosynthesis; L-isoleucine from 2-oxobutanoate: step 2/4. It participates in amino-acid biosynthesis; L-valine biosynthesis; L-valine from pyruvate: step 2/4. In terms of biological role, involved in the biosynthesis of branched-chain amino acids (BCAA). Catalyzes an alkyl-migration followed by a ketol-acid reduction of (S)-2-acetolactate (S2AL) to yield (R)-2,3-dihydroxy-isovalerate. In the isomerase reaction, S2AL is rearranged via a Mg-dependent methyl migration to produce 3-hydroxy-3-methyl-2-ketobutyrate (HMKB). In the reductase reaction, this 2-ketoacid undergoes a metal-dependent reduction by NADPH or NADH to yield (R)-2,3-dihydroxy-isovalerate. This is Ketol-acid reductoisomerase (NAD(P)(+)) from Metallosphaera sedula (strain ATCC 51363 / DSM 5348 / JCM 9185 / NBRC 15509 / TH2).